The following is a 345-amino-acid chain: Phosphoribosylformylglycinamidine cyclo-ligase (345 aa).

Belongs to the AIR synthase family.

It localises to the cytoplasm. The enzyme catalyses 2-formamido-N(1)-(5-O-phospho-beta-D-ribosyl)acetamidine + ATP = 5-amino-1-(5-phospho-beta-D-ribosyl)imidazole + ADP + phosphate + H(+). Its pathway is purine metabolism; IMP biosynthesis via de novo pathway; 5-amino-1-(5-phospho-D-ribosyl)imidazole from N(2)-formyl-N(1)-(5-phospho-D-ribosyl)glycinamide: step 2/2. The sequence is that of Phosphoribosylformylglycinamidine cyclo-ligase from Synechococcus sp. (strain CC9902).